A 238-amino-acid chain; its full sequence is 4-hydroxy-tetrahydrodipicolinate reductase (238 aa).

Residue 12–17 coordinates NAD(+); that stretch reads GASGRM. An NADP(+)-binding site is contributed by arginine 40. Residues 93–95 and 117–120 each bind NAD(+); these read GTT and ASNF. Catalysis depends on histidine 149, which acts as the Proton donor/acceptor. Histidine 150 contributes to the (S)-2,3,4,5-tetrahydrodipicolinate binding site. Lysine 153 (proton donor) is an active-site residue. 159-160 provides a ligand contact to (S)-2,3,4,5-tetrahydrodipicolinate; it reads GT.

This sequence belongs to the DapB family.

The protein localises to the cytoplasm. The enzyme catalyses (S)-2,3,4,5-tetrahydrodipicolinate + NAD(+) + H2O = (2S,4S)-4-hydroxy-2,3,4,5-tetrahydrodipicolinate + NADH + H(+). It catalyses the reaction (S)-2,3,4,5-tetrahydrodipicolinate + NADP(+) + H2O = (2S,4S)-4-hydroxy-2,3,4,5-tetrahydrodipicolinate + NADPH + H(+). Its pathway is amino-acid biosynthesis; L-lysine biosynthesis via DAP pathway; (S)-tetrahydrodipicolinate from L-aspartate: step 4/4. Functionally, catalyzes the conversion of 4-hydroxy-tetrahydrodipicolinate (HTPA) to tetrahydrodipicolinate. The sequence is that of 4-hydroxy-tetrahydrodipicolinate reductase from Xanthomonas axonopodis pv. citri (strain 306).